The chain runs to 329 residues: BTB/POZ domain-containing adapter for CUL3-mediated RhoA degradation protein 1 (329 aa).

The span at 1–15 (MSAEASGPAAAEAPS) shows a compositional bias: low complexity. The interval 1 to 21 (MSAEASGPAAAEAPSLEVAKP) is disordered. Residues 41–109 (KYVKLNVGGS…LRDGSVPLPE (69 aa)) enclose the BTB domain. The interval 280–302 (LEATGGAAGGGGASRGEDEDNRE) is disordered.

Belongs to the BACURD family. As to quaternary structure, homotetramer; forms a two-fold symmetric tetramer in solution. Interacts with CUL3; interaction is direct and forms a 5:5 heterodecamer. Component of the BCR(KCTD13) E3 ubiquitin ligase complex, at least composed of CUL3, KCTD13/BACURD1 and RBX1. Interacts with RHOA; with a preference for RhoA-GDP. Interacts with POLD2 and PCNA. Interacts with SPRTN.

Its subcellular location is the nucleus. Its pathway is protein modification; protein ubiquitination. Substrate-specific adapter of a BCR (BTB-CUL3-RBX1) E3 ubiquitin-protein ligase complex required for synaptic transmission. The BCR(KCTD13) E3 ubiquitin ligase complex mediates the ubiquitination of RHOA, leading to its degradation by the proteasome, thereby regulating the actin cytoskeleton and promoting synaptic transmission. This chain is BTB/POZ domain-containing adapter for CUL3-mediated RhoA degradation protein 1 (KCTD13), found in Bos taurus (Bovine).